An 86-amino-acid chain; its full sequence is RNA-binding protein Hfq (86 aa).

Residues 9-68 (DIFLNVLRRERIQVSIYLFNGIKLQGHIESFDQFVIVLKNTISQMVYKHAVSTIVPSKFV) enclose the Sm domain.

The protein belongs to the Hfq family. As to quaternary structure, homohexamer.

RNA chaperone that binds small regulatory RNA (sRNAs) and mRNAs to facilitate mRNA translational regulation in response to envelope stress, environmental stress and changes in metabolite concentrations. Also binds with high specificity to tRNAs. The protein is RNA-binding protein Hfq of Baumannia cicadellinicola subsp. Homalodisca coagulata.